Consider the following 242-residue polypeptide: ATP-dependent dethiobiotin synthetase BioD (242 aa).

Residue 12 to 17 participates in ATP binding; sequence EVGKTV. Threonine 16 contacts Mg(2+). Residue lysine 37 is part of the active site. Serine 41 contacts substrate. ATP-binding positions include aspartate 51 and 112 to 115; that span reads EGAG. 2 residues coordinate Mg(2+): aspartate 51 and glutamate 112.

It belongs to the dethiobiotin synthetase family. In terms of assembly, homodimer. Requires Mg(2+) as cofactor.

The protein localises to the cytoplasm. It catalyses the reaction (7R,8S)-7,8-diammoniononanoate + CO2 + ATP = (4R,5S)-dethiobiotin + ADP + phosphate + 3 H(+). It participates in cofactor biosynthesis; biotin biosynthesis; biotin from 7,8-diaminononanoate: step 1/2. Functionally, catalyzes a mechanistically unusual reaction, the ATP-dependent insertion of CO2 between the N7 and N8 nitrogen atoms of 7,8-diaminopelargonic acid (DAPA, also called 7,8-diammoniononanoate) to form a ureido ring. The chain is ATP-dependent dethiobiotin synthetase BioD from Bacillus cereus (strain AH820).